Reading from the N-terminus, the 251-residue chain is Eukaryotic translation initiation factor 4E-3 (251 aa).

The segment at 200–251 (DSSARTSSTVKPRICLPAKDPAPVKEKGPAATTSPSNPGTEATGTSPATPTP) is disordered. Positions 230 to 251 (ATTSPSNPGTEATGTSPATPTP) are enriched in polar residues.

It belongs to the eukaryotic initiation factor 4E family. As to quaternary structure, eIF4F is a multi-subunit complex, the composition of which varies with external and internal environmental conditions. It is composed of at least eIF4A, eIF4E and eIF4G. eIF4E is also known to interact with other partners. Interacts with mxt. Component of the pid-1 variant of the PETISCO complex (also called the pid-3, erh-2, tofu-6, and ife-3 small RNA complex) containing at least pid-1, tofu-6, ife-3, pid-3, and erh-2, which is required for the biogenesis of a class of 21 nucleotide PIWI-interacting RNAs (piRNAs) that possess a uracil residue at the 5'-end (also called 21U-RNAs). Component of the tost-1 variant of the PETISCO complex (also called the pid-3, erh-2, tofu-6, and ife-3 small RNA complex) containing at least tost-1, tofu-6, ife-3, pid-3, and erh-2, which plays an essential role in embryogenesis. Within the pid-1 and tost-1 variants of the PETISCO complexes interacts with tofu-6 (via C-terminus). In contrast to the pid-1 variant of the PETISCO complex, the tost-1 variant of the PETISCO complex plays a minor role in the biogenesis of 21U-RNAs. As to expression, highly expressed in the germline (at protein level).

Its subcellular location is the cytoplasmic granule. It is found in the cytoplasm. It localises to the perinuclear region. Recognizes and binds the 7-methylguanosine-containing mRNA cap during an early step in the initiation of protein synthesis and facilitates ribosome binding by inducing the unwinding of the mRNAs secondary structures. All 5 eIF4E proteins bind monomethyl cap structures. Only ife-1, ife-2 and ife-5 bind trimethyl cap structures which result from trans-splicing. Translation of trimethyl cap structure mRNAs may be regulated by intracellular redox state; disulfide bonds change the width and depth of the cap-binding cavity determining selectivity to mRNA caps. Ife-3 is essential for viability. Component of the pid-1 and tost-1 variants of the PETISCO complexes, which have roles in the biogenesis of a class of 21 nucleotide PIWI-interacting RNAs (piRNAs) that possess a uracil residue at the 5'-end (also called 21U-RNAs) and embryogenesis, respectively. Within the pid-1 variant of the PETISCO complex binds to capped 21U-RNA precursor molecules, possibly playing a role in the processing of the 5' end of the molecules to promote binding of other complex components such as pid-3. However, it is not essential for the biogenesis of 21U-RNAs by itself. Within the tost-1 variant of the PETISCO complex binds to splice leader SL1 RNA fragments to possibly play a role in their processing. This Caenorhabditis elegans protein is Eukaryotic translation initiation factor 4E-3.